The chain runs to 412 residues: NFATC2-interacting protein (412 aa).

Positions 1-38 (MAEPLRGRGPRSRGGRGARRARGARGRCPRARQSPARL) are disordered. The segment covering 8–30 (RGPRSRGGRGARRARGARGRCPR) has biased composition (basic residues). Phosphoserine is present on residues S49, S51, S79, S81, and S83. The segment at 58 to 115 (VADPVEVPVARLPAPAKPEQDSDSDSEGAAEGPAGAPRTLVRRRRRRLLDPGEAPVVP) is disordered. Residues 86–96 (AAEGPAGAPRT) are compositionally biased toward low complexity. S118 carries the phosphoserine modification. A Glycyl lysine isopeptide (Lys-Gly) (interchain with G-Cter in SUMO2) cross-link involves residue K120. Positions 136–206 (KLCPSEPEDE…SSRNKSRKHT (71 aa)) are disordered. The stretch at 168–227 (RKKLRKKCEKEEKKMEEFPDQDISPLPQPSSRNKSRKHTEALQKLREVNKRLQDLRSCLS) forms a coiled coil. A compositionally biased stretch (basic and acidic residues) spans 175–184 (CEKEEKKMEE). Residues S191, S197, and S307 each carry the phosphoserine modification. Phosphothreonine is present on residues T309 and T311. The 72-residue stretch at 341-412 (LRLRVQGKEK…ESGDLIEVWG (72 aa)) folds into the Ubiquitin-like domain. S362 and S383 each carry phosphoserine.

Interacts with NFATC2, TRAF1, TRAF2 and PRMT1. Interacts with UBE2I/UBC9. In terms of processing, methylation at the N-terminus by PRMT1 modulates interaction with the NFAT complex and results in augmented cytokine production. Highest level detected in spleen, thymus and testis.

The protein resides in the nucleus. It is found in the cytoplasm. Functionally, in T-helper 2 (Th2) cells, regulates the magnitude of NFAT-driven transcription of a specific subset of cytokine genes, including IL3, IL4, IL5 and IL13, but not IL2. Recruits PRMT1 to the IL4 promoter; this leads to enhancement of histone H4 'Arg-3'-methylation and facilitates subsequent histone acetylation at the IL4 locus, thus promotes robust cytokine expression. Down-regulates formation of poly-SUMO chains by UBE2I/UBC9. This chain is NFATC2-interacting protein (Nfatc2ip), found in Mus musculus (Mouse).